A 117-amino-acid polypeptide reads, in one-letter code: Large ribosomal subunit protein eL34 (117 aa).

Residue Ser12 is modified to Phosphoserine. N6-acetyllysine is present on residues Lys36 and Lys43. Residue Lys108 forms a Glycyl lysine isopeptide (Lys-Gly) (interchain with G-Cter in SUMO2) linkage.

This sequence belongs to the eukaryotic ribosomal protein eL34 family. As to quaternary structure, component of the large ribosomal subunit.

The protein localises to the cytoplasm. It is found in the cytosol. The protein resides in the endoplasmic reticulum. Component of the large ribosomal subunit. The ribosome is a large ribonucleoprotein complex responsible for the synthesis of proteins in the cell. The protein is Large ribosomal subunit protein eL34 (Rpl34) of Rattus norvegicus (Rat).